The following is a 215-amino-acid chain: Leucyl/phenylalanyl-tRNA--protein transferase (215 aa).

This sequence belongs to the L/F-transferase family.

It is found in the cytoplasm. The enzyme catalyses N-terminal L-lysyl-[protein] + L-leucyl-tRNA(Leu) = N-terminal L-leucyl-L-lysyl-[protein] + tRNA(Leu) + H(+). It catalyses the reaction N-terminal L-arginyl-[protein] + L-leucyl-tRNA(Leu) = N-terminal L-leucyl-L-arginyl-[protein] + tRNA(Leu) + H(+). It carries out the reaction L-phenylalanyl-tRNA(Phe) + an N-terminal L-alpha-aminoacyl-[protein] = an N-terminal L-phenylalanyl-L-alpha-aminoacyl-[protein] + tRNA(Phe). Functionally, functions in the N-end rule pathway of protein degradation where it conjugates Leu, Phe and, less efficiently, Met from aminoacyl-tRNAs to the N-termini of proteins containing an N-terminal arginine or lysine. The sequence is that of Leucyl/phenylalanyl-tRNA--protein transferase from Campylobacter jejuni subsp. doylei (strain ATCC BAA-1458 / RM4099 / 269.97).